The following is a 597-amino-acid chain: Elongation factor 4 (597 aa).

In terms of domain architecture, tr-type G spans 2–184 (QHIRNFSIIA…TIVARVPAPQ (183 aa)). GTP contacts are provided by residues 14 to 19 (DHGKST) and 131 to 134 (NKMD).

Belongs to the TRAFAC class translation factor GTPase superfamily. Classic translation factor GTPase family. LepA subfamily.

Its subcellular location is the cell inner membrane. It catalyses the reaction GTP + H2O = GDP + phosphate + H(+). Required for accurate and efficient protein synthesis under certain stress conditions. May act as a fidelity factor of the translation reaction, by catalyzing a one-codon backward translocation of tRNAs on improperly translocated ribosomes. Back-translocation proceeds from a post-translocation (POST) complex to a pre-translocation (PRE) complex, thus giving elongation factor G a second chance to translocate the tRNAs correctly. Binds to ribosomes in a GTP-dependent manner. In Bordetella petrii (strain ATCC BAA-461 / DSM 12804 / CCUG 43448), this protein is Elongation factor 4.